The primary structure comprises 324 residues: Glyoxylate/hydroxypyruvate reductase B (324 aa).

Active-site residues include arginine 237 and glutamate 266. Residue histidine 285 is the Proton donor of the active site.

Belongs to the D-isomer specific 2-hydroxyacid dehydrogenase family. GhrB subfamily. As to quaternary structure, homodimer.

It is found in the cytoplasm. It catalyses the reaction glycolate + NADP(+) = glyoxylate + NADPH + H(+). The catalysed reaction is (R)-glycerate + NAD(+) = 3-hydroxypyruvate + NADH + H(+). It carries out the reaction (R)-glycerate + NADP(+) = 3-hydroxypyruvate + NADPH + H(+). Catalyzes the NADPH-dependent reduction of glyoxylate and hydroxypyruvate into glycolate and glycerate, respectively. This chain is Glyoxylate/hydroxypyruvate reductase B, found in Salmonella dublin (strain CT_02021853).